The primary structure comprises 308 residues: 11-beta-hydroxysteroid dehydrogenase-like 2 (308 aa).

A helical; Signal-anchor for type II membrane protein membrane pass occupies residues 10–30 (FLLPPLTISFLVLFYPFYLFT). NADP(+) is bound by residues 53 to 79 (GASS…VARR) and Asp-104. Ser-183 lines the substrate pocket. Tyr-196 serves as the catalytic Proton acceptor. Residues 196 to 200 (YSASK) and Lys-200 each bind NADP(+).

This sequence belongs to the short-chain dehydrogenases/reductases (SDR) family.

The protein resides in the membrane. This Arabidopsis thaliana (Mouse-ear cress) protein is 11-beta-hydroxysteroid dehydrogenase-like 2 (HSD2).